The primary structure comprises 256 residues: Ribosomal RNA small subunit methyltransferase A (256 aa).

S-adenosyl-L-methionine-binding residues include Asn12, Leu14, Gly39, Glu60, Asp85, and Asn103.

This sequence belongs to the class I-like SAM-binding methyltransferase superfamily. rRNA adenine N(6)-methyltransferase family. RsmA subfamily.

It localises to the cytoplasm. It carries out the reaction adenosine(1518)/adenosine(1519) in 16S rRNA + 4 S-adenosyl-L-methionine = N(6)-dimethyladenosine(1518)/N(6)-dimethyladenosine(1519) in 16S rRNA + 4 S-adenosyl-L-homocysteine + 4 H(+). In terms of biological role, specifically dimethylates two adjacent adenosines (A1518 and A1519) in the loop of a conserved hairpin near the 3'-end of 16S rRNA in the 30S particle. May play a critical role in biogenesis of 30S subunits. The sequence is that of Ribosomal RNA small subunit methyltransferase A from Legionella pneumophila (strain Lens).